The chain runs to 156 residues: Small ribosomal subunit protein uS7 (156 aa).

The protein belongs to the universal ribosomal protein uS7 family. In terms of assembly, part of the 30S ribosomal subunit. Contacts proteins S9 and S11.

One of the primary rRNA binding proteins, it binds directly to 16S rRNA where it nucleates assembly of the head domain of the 30S subunit. Is located at the subunit interface close to the decoding center, probably blocks exit of the E-site tRNA. The protein is Small ribosomal subunit protein uS7 of Sinorhizobium medicae (strain WSM419) (Ensifer medicae).